Here is a 785-residue protein sequence, read N- to C-terminus: AP-1 complex subunit gamma-like 2 (785 aa).

An essential for ubiquitin-binding region spans residues 369 to 379 (LSLALVNSSNV). The interval 592–617 (GPQADEEAKESKEAAQLSEAAPVPTE) is disordered. Residues 665–780 (APIPDLKVFE…QEIFEVNNLP (116 aa)) form the GAE domain.

It belongs to the adaptor complexes large subunit family. As to quaternary structure, may interact with AP1S1/Sigma1A-adaptin and AP1S2/Sigma1B-adaptin. Probably does not interact with APB1. Interacts (via GAE domain) with RABEP1, NECAP1, CLINT1 and AFTPH/aftiphilin. (Microbial infection) Interacts with HBV major surface antigen L. Interacts with HBV core protein C in a ubiquitin-dependent manner. As to expression, expressed in all but one (skeletal muscle) tissues examined.

Its subcellular location is the golgi apparatus membrane. It localises to the cytoplasmic vesicle membrane. The protein resides in the endosome membrane. Functionally, may function in protein sorting in late endosomes or multivesucular bodies (MVBs). (Microbial infection) Involved in MVB-assisted maturation of hepatitis B virus (HBV). The chain is AP-1 complex subunit gamma-like 2 (AP1G2) from Homo sapiens (Human).